Reading from the N-terminus, the 322-residue chain is Putative T-box protein 11 (322 aa).

Residues 16–185 (LWRSCHEYDN…NNPYSTGSRK (170 aa)) constitute a DNA-binding region (T-box). The span at 171–182 (TLKTNNNPYSTG) shows a compositional bias: polar residues. Residues 171–214 (TLKTNNNPYSTGSRKDRRRERQSPVYSEGTSSEKSISPPPAKKI) are disordered.

It is found in the nucleus. In Caenorhabditis elegans, this protein is Putative T-box protein 11 (tbx-11).